Reading from the N-terminus, the 530-residue chain is Putative sulfate transporter YvdB (530 aa).

The next 10 helical transmembrane spans lie at 19-39 (LIAG…FAIA), 41-61 (GVEP…ISLF), 68-88 (IGGP…QYGL), 91-111 (LLIA…FKLG), 121-141 (VIVG…IANF), 164-184 (LGTF…ILLV), 192-212 (VPGA…FFPD), 241-261 (MVML…ESIL), 313-333 (AVSP…LLVF), and 384-404 (VLFD…VFFI). The region spanning 420–530 (PVLAKREDPS…FFDHHDEITG (111 aa)) is the STAS domain.

Belongs to the SLC26A/SulP transporter (TC 2.A.53) family.

It is found in the cell membrane. The polypeptide is Putative sulfate transporter YvdB (yvdB) (Bacillus subtilis (strain 168)).